The primary structure comprises 705 residues: Rab guanine nucleotide exchange factor sec2 (705 aa).

Positions 144 to 285 (QTTLDDNLVA…KSVMQGMNIA (142 aa)) form a coiled coil.

This sequence belongs to the SEC2 family.

In terms of biological role, guanine nucleotide exchange factor that plays an important role in regulating the growth and virulence, probably by regulating the autophagy pathway. Affects the sensitivity to cell wall disruptors and the cell wall thickness by regulating the expression levels of the cell wall integrity (CWI) pathway genes, thus coordinating the growth and virulence. Positively regulates the autophagy pathway to enhance the expression of CWI pathway genes in the presence of autophagy inducers. This is Rab guanine nucleotide exchange factor sec2 from Aspergillus fumigatus (strain ATCC MYA-4609 / CBS 101355 / FGSC A1100 / Af293) (Neosartorya fumigata).